The primary structure comprises 343 residues: Holliday junction branch migration complex subunit RuvB (343 aa).

Positions Met-1–Tyr-186 are large ATPase domain (RuvB-L). Residues Leu-25, Arg-26, Gly-67, Lys-70, Thr-71, Thr-72, Glu-133–Tyr-135, Arg-176, Tyr-186, and Arg-223 contribute to the ATP site. A Mg(2+)-binding site is contributed by Thr-71. The small ATPAse domain (RuvB-S) stretch occupies residues Asp-187–Asn-257. The interval Arg-260–Asp-343 is head domain (RuvB-H). Arg-315 and Arg-320 together coordinate DNA.

This sequence belongs to the RuvB family. Homohexamer. Forms an RuvA(8)-RuvB(12)-Holliday junction (HJ) complex. HJ DNA is sandwiched between 2 RuvA tetramers; dsDNA enters through RuvA and exits via RuvB. An RuvB hexamer assembles on each DNA strand where it exits the tetramer. Each RuvB hexamer is contacted by two RuvA subunits (via domain III) on 2 adjacent RuvB subunits; this complex drives branch migration. In the full resolvosome a probable DNA-RuvA(4)-RuvB(12)-RuvC(2) complex forms which resolves the HJ.

Its subcellular location is the cytoplasm. It carries out the reaction ATP + H2O = ADP + phosphate + H(+). Functionally, the RuvA-RuvB-RuvC complex processes Holliday junction (HJ) DNA during genetic recombination and DNA repair, while the RuvA-RuvB complex plays an important role in the rescue of blocked DNA replication forks via replication fork reversal (RFR). RuvA specifically binds to HJ cruciform DNA, conferring on it an open structure. The RuvB hexamer acts as an ATP-dependent pump, pulling dsDNA into and through the RuvAB complex. RuvB forms 2 homohexamers on either side of HJ DNA bound by 1 or 2 RuvA tetramers; 4 subunits per hexamer contact DNA at a time. Coordinated motions by a converter formed by DNA-disengaged RuvB subunits stimulates ATP hydrolysis and nucleotide exchange. Immobilization of the converter enables RuvB to convert the ATP-contained energy into a lever motion, pulling 2 nucleotides of DNA out of the RuvA tetramer per ATP hydrolyzed, thus driving DNA branch migration. The RuvB motors rotate together with the DNA substrate, which together with the progressing nucleotide cycle form the mechanistic basis for DNA recombination by continuous HJ branch migration. Branch migration allows RuvC to scan DNA until it finds its consensus sequence, where it cleaves and resolves cruciform DNA. This Porphyromonas gingivalis (strain ATCC BAA-308 / W83) protein is Holliday junction branch migration complex subunit RuvB.